The following is a 232-amino-acid chain: Vesicle transport through interaction with t-SNAREs homolog 1B (232 aa).

At alanine 2 the chain carries N-acetylalanine. Interaction with CLINT1 stretches follow at residues 2–23 (ATSAASSEHFEKLHEIFRGLHE) and 69–73 (APLSF). The Cytoplasmic segment spans residues 2-208 (ATSAASSEHF…SRKVTTNKLL (207 aa)). A coiled-coil region spans residues 35–98 (MAGTEEKKKL…AKLHREVRST (64 aa)). Phosphothreonine is present on threonine 103. Arginine 107 carries the post-translational modification Omega-N-methylarginine. Residue serine 138 is modified to Phosphoserine. Residues 161–198 (SEIIEELGEQRDQLERTKSRLVNTSENLSKSRKILRSM) adopt a coiled-coil conformation. A helical; Anchor for type IV membrane protein transmembrane segment spans residues 209–229 (LSIVILLELAILGGLVYYKFL). Residues 230–232 (RRH) lie on the Vesicular side of the membrane.

Belongs to the VTI1 family. As to quaternary structure, forms a SNARE complex with STX7, STX8 and VAMP8 which functions in the homotypic fusion of late endosomes. Component of the SNARE complex composed of STX7, STX8, VAMP7 and VIT1B that is required for heterotypic fusion of late endosomes with lysosomes. May interact with STX17. Interacts with CLINT1.

It is found in the early endosome membrane. It localises to the late endosome membrane. The protein localises to the lysosome membrane. Its subcellular location is the cytoplasmic granule. The protein resides in the recycling endosome membrane. In terms of biological role, V-SNARE that mediates vesicle transport pathways through interactions with t-SNAREs on the target membrane. These interactions are proposed to mediate aspects of the specificity of vesicle trafficking and to promote fusion of the lipid bilayers. May be concerned with increased secretion of cytokines associated with cellular senescence. The polypeptide is Vesicle transport through interaction with t-SNAREs homolog 1B (VTI1B) (Bos taurus (Bovine)).